The sequence spans 118 residues: Large ribosomal subunit protein uL24 (118 aa).

It belongs to the universal ribosomal protein uL24 family. In terms of assembly, part of the 50S ribosomal subunit.

One of two assembly initiator proteins, it binds directly to the 5'-end of the 23S rRNA, where it nucleates assembly of the 50S subunit. Its function is as follows. One of the proteins that surrounds the polypeptide exit tunnel on the outside of the subunit. This is Large ribosomal subunit protein uL24 from Prochlorococcus marinus (strain NATL1A).